The chain runs to 429 residues: Argininosuccinate lyase (429 aa).

Belongs to the lyase 1 family. Argininosuccinate lyase subfamily.

It is found in the cytoplasm. It carries out the reaction 2-(N(omega)-L-arginino)succinate = fumarate + L-arginine. Its pathway is amino-acid biosynthesis; L-arginine biosynthesis; L-arginine from L-ornithine and carbamoyl phosphate: step 3/3. This is Argininosuccinate lyase from Pyrobaculum neutrophilum (strain DSM 2338 / JCM 9278 / NBRC 100436 / V24Sta) (Thermoproteus neutrophilus).